A 1044-amino-acid chain; its full sequence is Outer dynein arm-docking complex subunit 2 (1044 aa).

Basic and acidic residues-rich tracts occupy residues 317 to 338 (IKFS…EVAI) and 379 to 401 (SKDR…EKSR). Disordered stretches follow at residues 317–409 (IKFS…PGRA) and 423–446 (ISDS…ANAD). HEAT repeat units follow at residues 448-485 (PSEY…AQET), 487-527 (QLAI…NPQI), 530-568 (NIVD…FRRA), 627-665 (AIRK…EENY), and 668-706 (AIKA…DEET). 11 ARM repeats span residues 484-523 (ETCQ…EISH), 525-564 (PQIR…NVAK), 535-577 (GGLP…RHGG), 622-661 (YANK…ECAS), 663-702 (ENYR…QCAE), 746-785 (KENV…ECCQ), 828-867 (PESM…PCIQ), 871-910 (DAGE…NIAK), 912-951 (QENL…RCCM), 953-992 (GRNR…QLSE), and 1004-1031 (GAVK…ISNI). HEAT repeat units lie at residues 831–870 (MMII…QNAK), 874–914 (EMVR…DQEN), 916–955 (AVIT…WGRN), 958–996 (AFGE…DADN), and 999–1037 (TMHE…LALA).

As to quaternary structure, component of the outer dynein arm-docking complex along with ODAD1, ODAD3, ODAD4 and CLXN. Interacts with CFAP61. Expressed in trachea multiciliated cells.

It is found in the cytoplasm. The protein localises to the cytoskeleton. The protein resides in the cilium axoneme. Its subcellular location is the cilium basal body. Its function is as follows. Component of the outer dynein arm-docking complex (ODA-DC) that mediates outer dynein arms (ODA) binding onto the doublet microtubule. Involved in mediating assembly of both ODAs and their axonemal docking complex onto ciliary microtubules. In Bos taurus (Bovine), this protein is Outer dynein arm-docking complex subunit 2 (ODAD2).